Consider the following 612-residue polypeptide: Glycosyltransferase 25 family member (612 aa).

An N-terminal signal peptide occupies residues 1–20 (MNKQVIFGLLLACILVCISG). 4 N-linked (GlcNAc...) asparagine glycosylation sites follow: Asn106, Asn227, Asn263, and Asn524. The Prevents secretion from ER motif lies at 609–612 (HQEL).

It belongs to the glycosyltransferase 25 family.

It localises to the endoplasmic reticulum lumen. The protein is Glycosyltransferase 25 family member of Drosophila melanogaster (Fruit fly).